A 427-amino-acid polypeptide reads, in one-letter code: MGSIREPLHLVVIGGGLAGLSAAIATRLEGHRCTLLEKAPEFNEVGAGLQLTPNSTRLLRRWGVLDKLRSKAGIPTQLTVRRYDGSKVLSRADGWDETMQSQYDAPFWDMHRADLQAAMVARARHLGVDVRTGAEVESIDTDGVAVILAGTRERLQGDVVLAADGLWSRTRAALFPDLGTAPQPTGDLAYRIILRLENLQHDPELAAWVAKPTVNFWVGADAHAVAYSVRGGSELNLVLLCPDDLPEGCARAQADLEEMRARFQGWDPLLCRFLDNVKTVEKWRLMHMPSLPKWNHESGYFTMAGDSCHPMLPYLAQGANSAMEDGAVLGRLLGSIHEASRIPDVLAVYQEIRKVRVEKIAKQALKQRYNFHMPDGPLQEARDEAMTTHQQREEEYASQWTCPIMQPWLYGYDAIAVADSAVANTKL.

Residues methionine 1–alanine 22 form the signal peptide. FAD is bound at residue glutamate 37. N-linked (GlcNAc...) asparagine glycosylation is present at asparagine 54. FAD contacts are provided by arginine 112, aspartate 306, and alanine 319.

It belongs to the paxM FAD-dependent monooxygenase family. It depends on FAD as a cofactor.

Its pathway is secondary metabolite biosynthesis. In terms of biological role, FAD-dependent monooxygenase; part of the gene cluster that mediates the biosynthesis of the bibenzoquinone oosporein, a metabolite required for fungal virulence that acts by evading host immunity to facilitate fungal multiplication in insects. The non-reducing polyketide synthase OpS1 produces orsellinic acid by condensing acetyl-CoA with 3 malonyl-CoA units. Orsellinic acid is then hydroxylated to benzenetriol by the hydroxylase OpS4. The intermediate is oxidized either nonenzymatically to 5,5'-dideoxy-oosporein or enzymatically to benzenetetrol by the oxidoreductase OpS7. The latter is further dimerized to oosporein by the catalase OpS5. OpS6 probably functions en route for protecting cells against oxidative stress by scavenging any leaked free radical form of benzenetetrol by activating the thiol group of glutathione. The protein is FAD-dependent monooxygenase OpS4 of Beauveria bassiana (strain ARSEF 2860) (White muscardine disease fungus).